The sequence spans 245 residues: 1-(5-phosphoribosyl)-5-[(5-phosphoribosylamino)methylideneamino] imidazole-4-carboxamide isomerase (245 aa).

The active-site Proton acceptor is D8. The active-site Proton donor is the D130.

It belongs to the HisA/HisF family.

It localises to the cytoplasm. It carries out the reaction 1-(5-phospho-beta-D-ribosyl)-5-[(5-phospho-beta-D-ribosylamino)methylideneamino]imidazole-4-carboxamide = 5-[(5-phospho-1-deoxy-D-ribulos-1-ylimino)methylamino]-1-(5-phospho-beta-D-ribosyl)imidazole-4-carboxamide. The protein operates within amino-acid biosynthesis; L-histidine biosynthesis; L-histidine from 5-phospho-alpha-D-ribose 1-diphosphate: step 4/9. The polypeptide is 1-(5-phosphoribosyl)-5-[(5-phosphoribosylamino)methylideneamino] imidazole-4-carboxamide isomerase (Pseudomonas entomophila (strain L48)).